A 1091-amino-acid chain; its full sequence is Rho GTPase-activating protein 7 (1091 aa).

The region spanning 11–78 is the SAM domain; sequence LTQIEAKEAC…LNKCAVMKLE (68 aa). Residues Ser86, Ser89, and Ser129 each carry the phosphoserine modification. Disordered regions lie at residues 120–181, 296–329, 402–439, and 491–552; these read SPKQ…TTPR, RSVS…TRSL, RTGS…SSRM, and SDEG…SGVG. A compositionally biased stretch (polar residues) spans 130–143; the sequence is PDNSRLQSATSRES. Composition is skewed to low complexity over residues 155–166 and 298–324; these read SSIRSLSSTSSS and VSNS…SPVT. The focal adhesion-targeting (FAT) stretch occupies residues 274–447; the sequence is QLNCVEISAL…RMSIYDNVPG (174 aa). Ser321 carries the post-translational modification Phosphoserine. Positions 414-425 are enriched in basic and acidic residues; that stretch reads LRRENSSDSPKE. The span at 499–511 shows a compositional bias: polar residues; that stretch reads ALDSVSPCPSSPK. Over residues 513 to 525 the composition is skewed to basic and acidic residues; that stretch reads IHLDVDHDRRTPS. Residues 526–535 are compositionally biased toward polar residues; the sequence is DLDSTGNSLN. Residues 614 to 636 are polybasic cluster (PBR); it reads KHGFSWAVPKFMKRIKVPDYKDR. The 207-residue stretch at 641-847 folds into the Rho-GAP domain; sequence VPLTVNVQRS…HMIAECKKLF (207 aa). In terms of domain architecture, START spans 877 to 1084; sequence SNDQPADYRH…RDSFSNQSTE (208 aa).

As to quaternary structure, interacts with EF1A1, facilitates EF1A1 distribution to the membrane periphery and ruffles upon growth factor stimulation and suppresses cell migration. Interacts with tensin TNS1 (via N-terminus); the interaction is decreased by phosphorylation of TNS1. Interacts with TNS3 and PTEN; in resting cells, interacts with TNS3 (via C2 tensin-type domain) but, following growth factor stimulation, TNS3 and PTEN are phosphorylated which leads to weakened interaction with TNS3 and enhanced interaction with PTEN. Interacts (via C-terminus) with tensin TNS4 (via SH2 domain); the interaction is independent of tyrosine phosphorylation of DLC1.

The protein localises to the cytoplasm. It localises to the cell junction. Its subcellular location is the focal adhesion. It is found in the membrane. In terms of biological role, functions as a GTPase-activating protein for the small GTPases RHOA, RHOB, RHOC and CDC42, terminating their downstream signaling. This induces morphological changes and detachment through cytoskeletal reorganization, playing a critical role in biological processes such as cell migration and proliferation. Also functions in vivo as an activator of the phospholipase PLCD1. Active DLC1 increases cell migration velocity but reduces directionality. Required for growth factor-induced epithelial cell migration; in resting cells, interacts with TNS3 while PTEN interacts with the p85 regulatory subunit of the PI3K kinase complex but growth factor stimulation induces phosphorylation of TNS3 and PTEN, causing them to change their binding preference so that PTEN interacts with DLC1 and TNS3 interacts with p85. The PTEN-DLC1 complex translocates to the posterior of migrating cells to activate RHOA while the TNS3-p85 complex translocates to the leading edge of migrating cells to promote RAC1 activation. This is Rho GTPase-activating protein 7 (Dlc1) from Rattus norvegicus (Rat).